A 285-amino-acid polypeptide reads, in one-letter code: Undecaprenyl-diphosphatase (285 aa).

The next 7 membrane-spanning stretches (helical) occupy residues 3–23 (ILLLVKAAIMGIVEGLTEFLP), 41–61 (GEIVKVFDIAIQTGAMFAVIW), 87–107 (LLIAFVPAVISGLALGGLIKE), 109–129 (LFHPVPVATAFVVGGLIILWV), 197–217 (TEFSFFLGIPTLMGAGAYSLI), 226–246 (GDLPVFAVGVVFAFLSALVCI), and 260–280 (VFAWYRIAFGGLVLLSAWGGW).

The protein belongs to the UppP family.

It is found in the cell inner membrane. The enzyme catalyses di-trans,octa-cis-undecaprenyl diphosphate + H2O = di-trans,octa-cis-undecaprenyl phosphate + phosphate + H(+). Functionally, catalyzes the dephosphorylation of undecaprenyl diphosphate (UPP). Confers resistance to bacitracin. This chain is Undecaprenyl-diphosphatase, found in Methylibium petroleiphilum (strain ATCC BAA-1232 / LMG 22953 / PM1).